A 206-amino-acid polypeptide reads, in one-letter code: Small ribosomal subunit protein uS4 (206 aa).

Residues G96 to K156 form the S4 RNA-binding domain.

Belongs to the universal ribosomal protein uS4 family. As to quaternary structure, part of the 30S ribosomal subunit. Contacts protein S5. The interaction surface between S4 and S5 is involved in control of translational fidelity.

Functionally, one of the primary rRNA binding proteins, it binds directly to 16S rRNA where it nucleates assembly of the body of the 30S subunit. In terms of biological role, with S5 and S12 plays an important role in translational accuracy. In Vibrio campbellii (strain ATCC BAA-1116), this protein is Small ribosomal subunit protein uS4.